The sequence spans 50 residues: Large ribosomal subunit protein bL33B (50 aa).

It belongs to the bacterial ribosomal protein bL33 family.

The protein is Large ribosomal subunit protein bL33B of Mesomycoplasma hyopneumoniae (strain 7448) (Mycoplasma hyopneumoniae).